The primary structure comprises 197 residues: Peptidyl-tRNA hydrolase (197 aa).

Y23 lines the tRNA pocket. H28 (proton acceptor) is an active-site residue. TRNA-binding residues include F73, N75, and N121.

Belongs to the PTH family. As to quaternary structure, monomer.

Its subcellular location is the cytoplasm. The enzyme catalyses an N-acyl-L-alpha-aminoacyl-tRNA + H2O = an N-acyl-L-amino acid + a tRNA + H(+). Functionally, hydrolyzes ribosome-free peptidyl-tRNAs (with 1 or more amino acids incorporated), which drop off the ribosome during protein synthesis, or as a result of ribosome stalling. Catalyzes the release of premature peptidyl moieties from peptidyl-tRNA molecules trapped in stalled 50S ribosomal subunits, and thus maintains levels of free tRNAs and 50S ribosomes. This Frankia alni (strain DSM 45986 / CECT 9034 / ACN14a) protein is Peptidyl-tRNA hydrolase.